A 211-amino-acid polypeptide reads, in one-letter code: Urease accessory protein UreF (211 aa).

The segment at 68-93 is disordered; it reads LAPDGADRETDARTPSPAARDASRSQ.

The protein belongs to the UreF family. As to quaternary structure, ureD, UreF and UreG form a complex that acts as a GTP-hydrolysis-dependent molecular chaperone, activating the urease apoprotein by helping to assemble the nickel containing metallocenter of UreC. The UreE protein probably delivers the nickel.

It localises to the cytoplasm. Its function is as follows. Required for maturation of urease via the functional incorporation of the urease nickel metallocenter. This is Urease accessory protein UreF from Mycobacterium marinum (strain ATCC BAA-535 / M).